The sequence spans 445 residues: RCC1 domain-containing protein RUG3, mitochondrial (445 aa).

The N-terminal 22 residues, 1 to 22, are a transit peptide targeting the mitochondrion; that stretch reads MAALSHRLRSFTRRFSSTRTTQ. RCC1 repeat units lie at residues 47–101, 118–169, 171–221, 222–279, 280–331, 333–383, and 385–442; these read TLQL…DSSS, DGDL…ALTH, GDVF…AITE, SGEL…ALTK, EGQL…ALTE, GKVL…AITD, and GELW…CLVS.

Interacts with ATM. Mostly expressed in roots and rosette leaves of young seedlings, and, to a lower extent, in the flowers and siliques of mature plants. Preferentially expressed in the vascular tissues.

Its subcellular location is the mitochondrion. Functionally, regulates DNA damage response (DDR) synergistically with ATM. Together with ATM, involved in the splicing of the ND2/NAD2 mRNA. Required for the accumulation of mitochondrial respiratory chain complex I. Negative regulator of plant responses to abscisic acid (ABA). May have a pivotal role in vegetative growth and the phase transition from vegetative to reproductive growth. The chain is RCC1 domain-containing protein RUG3, mitochondrial from Arabidopsis thaliana (Mouse-ear cress).